A 464-amino-acid polypeptide reads, in one-letter code: tRNA-2-methylthio-N(6)-dimethylallyladenosine synthase (464 aa).

The MTTase N-terminal domain maps to 5 to 122 (RKLYVKSFGC…LPEMLARVRD (118 aa)). Positions 14, 50, 85, 163, 167, and 170 each coordinate [4Fe-4S] cluster. Residues 149-383 (KKRGPTAFVT…VLEASKTAFD (235 aa)) form the Radical SAM core domain. The TRAM domain occupies 384–446 (RACMGRRFDI…PNSLAGQVVD (63 aa)).

This sequence belongs to the methylthiotransferase family. MiaB subfamily. Monomer. Requires [4Fe-4S] cluster as cofactor.

The protein localises to the cytoplasm. It carries out the reaction N(6)-dimethylallyladenosine(37) in tRNA + (sulfur carrier)-SH + AH2 + 2 S-adenosyl-L-methionine = 2-methylsulfanyl-N(6)-dimethylallyladenosine(37) in tRNA + (sulfur carrier)-H + 5'-deoxyadenosine + L-methionine + A + S-adenosyl-L-homocysteine + 2 H(+). Functionally, catalyzes the methylthiolation of N6-(dimethylallyl)adenosine (i(6)A), leading to the formation of 2-methylthio-N6-(dimethylallyl)adenosine (ms(2)i(6)A) at position 37 in tRNAs that read codons beginning with uridine. This is tRNA-2-methylthio-N(6)-dimethylallyladenosine synthase from Azorhizobium caulinodans (strain ATCC 43989 / DSM 5975 / JCM 20966 / LMG 6465 / NBRC 14845 / NCIMB 13405 / ORS 571).